The chain runs to 181 residues: Inner membrane-spanning protein YciB (181 aa).

The next 5 membrane-spanning stretches (helical) occupy residues 10 to 30, 50 to 70, 72 to 92, 118 to 138, and 148 to 168; these read LVIF…GALI, MHLI…VFHD, AFIK…LGVS, VTWY…YVAF, and FKVF…VFYL.

The protein belongs to the YciB family.

It localises to the cell inner membrane. In terms of biological role, plays a role in cell envelope biogenesis, maintenance of cell envelope integrity and membrane homeostasis. In Shewanella oneidensis (strain ATCC 700550 / JCM 31522 / CIP 106686 / LMG 19005 / NCIMB 14063 / MR-1), this protein is Inner membrane-spanning protein YciB.